A 404-amino-acid polypeptide reads, in one-letter code: S-adenosylmethionine synthase (404 aa).

His16 serves as a coordination point for ATP. Position 18 (Asp18) interacts with Mg(2+). A K(+)-binding site is contributed by Glu44. Positions 57 and 100 each coordinate L-methionine. Residues 100–110 (QSPEINQGVAR) are flexible loop. Residues 177 to 179 (DGK), Asp257, 263 to 264 (RK), Ala280, and Lys284 contribute to the ATP site. Asp257 contributes to the L-methionine binding site. Lys288 provides a ligand contact to L-methionine.

This sequence belongs to the AdoMet synthase family. As to quaternary structure, homotetramer; dimer of dimers. Requires Mg(2+) as cofactor. K(+) is required as a cofactor.

Its subcellular location is the cytoplasm. The enzyme catalyses L-methionine + ATP + H2O = S-adenosyl-L-methionine + phosphate + diphosphate. The protein operates within amino-acid biosynthesis; S-adenosyl-L-methionine biosynthesis; S-adenosyl-L-methionine from L-methionine: step 1/1. Its function is as follows. Catalyzes the formation of S-adenosylmethionine (AdoMet) from methionine and ATP. The overall synthetic reaction is composed of two sequential steps, AdoMet formation and the subsequent tripolyphosphate hydrolysis which occurs prior to release of AdoMet from the enzyme. The polypeptide is S-adenosylmethionine synthase (Bifidobacterium adolescentis (strain ATCC 15703 / DSM 20083 / NCTC 11814 / E194a)).